The primary structure comprises 493 residues: Galactose-1-phosphate uridylyltransferase (493 aa).

Belongs to the galactose-1-phosphate uridylyltransferase type 2 family.

The protein resides in the cytoplasm. It carries out the reaction alpha-D-galactose 1-phosphate + UDP-alpha-D-glucose = alpha-D-glucose 1-phosphate + UDP-alpha-D-galactose. The protein operates within carbohydrate metabolism; galactose metabolism. The protein is Galactose-1-phosphate uridylyltransferase of Streptococcus thermophilus (strain CNRZ 1066).